The sequence spans 323 residues: o-succinylbenzoate synthase (323 aa).

K134 serves as the catalytic Proton donor. The Mg(2+) site is built by D162, E191, and D214. K236 acts as the Proton acceptor in catalysis.

It belongs to the mandelate racemase/muconate lactonizing enzyme family. MenC type 1 subfamily. Requires a divalent metal cation as cofactor.

It catalyses the reaction (1R,6R)-6-hydroxy-2-succinyl-cyclohexa-2,4-diene-1-carboxylate = 2-succinylbenzoate + H2O. Its pathway is quinol/quinone metabolism; 1,4-dihydroxy-2-naphthoate biosynthesis; 1,4-dihydroxy-2-naphthoate from chorismate: step 4/7. It functions in the pathway quinol/quinone metabolism; menaquinone biosynthesis. Its function is as follows. Converts 2-succinyl-6-hydroxy-2,4-cyclohexadiene-1-carboxylate (SHCHC) to 2-succinylbenzoate (OSB). The protein is o-succinylbenzoate synthase of Yersinia pestis bv. Antiqua (strain Antiqua).